The following is a 338-amino-acid chain: 1-aminocyclopropane-1-carboxylate deaminase (338 aa).

Lys-51 carries the N6-(pyridoxal phosphate)lysine modification. The active-site Nucleophile is Ser-78.

Belongs to the ACC deaminase/D-cysteine desulfhydrase family. In terms of assembly, homotrimer. Requires pyridoxal 5'-phosphate as cofactor.

The enzyme catalyses 1-aminocyclopropane-1-carboxylate + H2O = 2-oxobutanoate + NH4(+). Functionally, catalyzes a cyclopropane ring-opening reaction, the irreversible conversion of 1-aminocyclopropane-1-carboxylate (ACC) to ammonia and alpha-ketobutyrate. Allows growth on ACC as a nitrogen source. This is 1-aminocyclopropane-1-carboxylate deaminase from Pseudomonas fluorescens.